Consider the following 84-residue polypeptide: Phosphoribosylformylglycinamidine synthase subunit PurS (84 aa).

It belongs to the PurS family. In terms of assembly, homodimer or homotetramer. Part of the FGAM synthase complex composed of 1 PurL, 1 PurQ and 2 PurS subunits.

It is found in the cytoplasm. The enzyme catalyses N(2)-formyl-N(1)-(5-phospho-beta-D-ribosyl)glycinamide + L-glutamine + ATP + H2O = 2-formamido-N(1)-(5-O-phospho-beta-D-ribosyl)acetamidine + L-glutamate + ADP + phosphate + H(+). Its pathway is purine metabolism; IMP biosynthesis via de novo pathway; 5-amino-1-(5-phospho-D-ribosyl)imidazole from N(2)-formyl-N(1)-(5-phospho-D-ribosyl)glycinamide: step 1/2. Functionally, part of the phosphoribosylformylglycinamidine synthase complex involved in the purines biosynthetic pathway. Catalyzes the ATP-dependent conversion of formylglycinamide ribonucleotide (FGAR) and glutamine to yield formylglycinamidine ribonucleotide (FGAM) and glutamate. The FGAM synthase complex is composed of three subunits. PurQ produces an ammonia molecule by converting glutamine to glutamate. PurL transfers the ammonia molecule to FGAR to form FGAM in an ATP-dependent manner. PurS interacts with PurQ and PurL and is thought to assist in the transfer of the ammonia molecule from PurQ to PurL. In Bacillus subtilis (strain 168), this protein is Phosphoribosylformylglycinamidine synthase subunit PurS.